Here is a 434-residue protein sequence, read N- to C-terminus: 3-phosphoshikimate 1-carboxyvinyltransferase (434 aa).

The 3-phosphoshikimate site is built by K15, S16, and R20. Position 15 (K15) interacts with phosphoenolpyruvate. Phosphoenolpyruvate-binding residues include G96 and R124. 3-phosphoshikimate contacts are provided by S169, Q171, S195, D319, and K346. Q171 contacts phosphoenolpyruvate. Residue D319 is the Proton acceptor of the active site. Positions 350 and 394 each coordinate phosphoenolpyruvate.

Belongs to the EPSP synthase family. As to quaternary structure, monomer.

It localises to the cytoplasm. The enzyme catalyses 3-phosphoshikimate + phosphoenolpyruvate = 5-O-(1-carboxyvinyl)-3-phosphoshikimate + phosphate. Its pathway is metabolic intermediate biosynthesis; chorismate biosynthesis; chorismate from D-erythrose 4-phosphate and phosphoenolpyruvate: step 6/7. Its function is as follows. Catalyzes the transfer of the enolpyruvyl moiety of phosphoenolpyruvate (PEP) to the 5-hydroxyl of shikimate-3-phosphate (S3P) to produce enolpyruvyl shikimate-3-phosphate and inorganic phosphate. The sequence is that of 3-phosphoshikimate 1-carboxyvinyltransferase from Chlorobium phaeobacteroides (strain DSM 266 / SMG 266 / 2430).